The primary structure comprises 549 residues: Alanine aminotransferase 2-like (549 aa).

Lys367 carries the N6-(pyridoxal phosphate)lysine modification.

This sequence belongs to the class-I pyridoxal-phosphate-dependent aminotransferase family. Alanine aminotransferase subfamily. As to quaternary structure, homodimer. Pyridoxal 5'-phosphate is required as a cofactor.

It catalyses the reaction L-alanine + 2-oxoglutarate = pyruvate + L-glutamate. It functions in the pathway amino-acid degradation; L-alanine degradation via transaminase pathway; pyruvate from L-alanine: step 1/1. Its function is as follows. Catalyzes the reversible transamination between alanine and 2-oxoglutarate to form pyruvate and glutamate. The polypeptide is Alanine aminotransferase 2-like (gpt2l) (Danio rerio (Zebrafish)).